The sequence spans 202 residues: Large ribosomal subunit protein bL25 (202 aa).

Residues 182–202 (QTAPEEEEGTAAETTEPELAE) form a disordered region. Positions 185 to 202 (PEEEEGTAAETTEPELAE) are enriched in acidic residues.

It belongs to the bacterial ribosomal protein bL25 family. CTC subfamily. In terms of assembly, part of the 50S ribosomal subunit; part of the 5S rRNA/L5/L18/L25 subcomplex. Contacts the 5S rRNA. Binds to the 5S rRNA independently of L5 and L18.

Its function is as follows. This is one of the proteins that binds to the 5S RNA in the ribosome where it forms part of the central protuberance. This Enterococcus faecalis (strain ATCC 700802 / V583) protein is Large ribosomal subunit protein bL25.